The following is a 419-amino-acid chain: Enolase (419 aa).

Glutamine 160 is a binding site for (2R)-2-phosphoglycerate. Glutamate 204 functions as the Proton donor in the catalytic mechanism. Mg(2+) contacts are provided by aspartate 240, glutamate 283, and aspartate 309. Residues lysine 334, arginine 363, serine 364, and lysine 385 each contribute to the (2R)-2-phosphoglycerate site. Lysine 334 functions as the Proton acceptor in the catalytic mechanism.

The protein belongs to the enolase family. It depends on Mg(2+) as a cofactor.

It is found in the cytoplasm. The protein localises to the secreted. Its subcellular location is the cell surface. The catalysed reaction is (2R)-2-phosphoglycerate = phosphoenolpyruvate + H2O. The protein operates within carbohydrate degradation; glycolysis; pyruvate from D-glyceraldehyde 3-phosphate: step 4/5. Its function is as follows. Catalyzes the reversible conversion of 2-phosphoglycerate (2-PG) into phosphoenolpyruvate (PEP). It is essential for the degradation of carbohydrates via glycolysis. This chain is Enolase, found in Pyrobaculum aerophilum (strain ATCC 51768 / DSM 7523 / JCM 9630 / CIP 104966 / NBRC 100827 / IM2).